Reading from the N-terminus, the 55-residue chain is ASATWGAAYPACENNCRKKYDLCIRCQGKWAGKRGKCAAHCIIQKNNCKGKCKKE.

Pro10 bears the Hydroxyproline mark. Intrachain disulfides connect Cys12–Cys52, Cys16–Cys48, Cys23–Cys41, and Cys26–Cys37.

It belongs to the worm B-toxin family.

It localises to the secreted. Functionally, this toxin increases the excitability of nerves by delaying the inactivation of the voltage-gated sodium channel (Nav). Only acts on some crustacean. Is more abundant, but 15-fold less toxic than neurotoxin B-II. The protein is Neurotoxin B-IV of Cerebratulus lacteus (Milky ribbon worm).